A 190-amino-acid polypeptide reads, in one-letter code: Hypoxanthine/guanine phosphoribosyltransferase (190 aa).

Belongs to the purine/pyrimidine phosphoribosyltransferase family. Archaeal HPRT subfamily. Homodimer.

It is found in the cytoplasm. It catalyses the reaction IMP + diphosphate = hypoxanthine + 5-phospho-alpha-D-ribose 1-diphosphate. The enzyme catalyses GMP + diphosphate = guanine + 5-phospho-alpha-D-ribose 1-diphosphate. It participates in purine metabolism; IMP biosynthesis via salvage pathway; IMP from hypoxanthine: step 1/1. Functionally, catalyzes a salvage reaction resulting in the formation of IMP that is energically less costly than de novo synthesis. This is Hypoxanthine/guanine phosphoribosyltransferase from Methanobacterium paludis (strain DSM 25820 / JCM 18151 / SWAN1).